The sequence spans 130 residues: Lysozyme C (130 aa).

Positions 2 to 130 (KVYGRCELAA…VNVWIRGCRL (129 aa)) constitute a C-type lysozyme domain. Disulfide bonds link cysteine 7–cysteine 128, cysteine 31–cysteine 116, cysteine 65–cysteine 81, and cysteine 77–cysteine 95. Catalysis depends on residues glutamate 36 and aspartate 53.

Belongs to the glycosyl hydrolase 22 family. As to quaternary structure, monomer.

It localises to the secreted. It catalyses the reaction Hydrolysis of (1-&gt;4)-beta-linkages between N-acetylmuramic acid and N-acetyl-D-glucosamine residues in a peptidoglycan and between N-acetyl-D-glucosamine residues in chitodextrins.. In terms of biological role, lysozymes have primarily a bacteriolytic function; those in tissues and body fluids are associated with the monocyte-macrophage system and enhance the activity of immunoagents. The protein is Lysozyme C (LYZ) of Phasianus versicolor (Green pheasant).